The following is a 147-amino-acid chain: Zinc-dependent sulfurtransferase SufU (147 aa).

Zn(2+)-binding residues include Cys41, Asp43, Cys66, and Cys128.

It belongs to the NifU family. As to quaternary structure, interacts with SufS; this interaction enhances SufS cysteine desulfurase activity. Interacts with frataxin/Fra. The cofactor is Zn(2+).

Functionally, part of the SUF-like system that mediates the biosynthesis of iron-sulfur (Fe-S) clusters. Acts as a sulfurtransferase and thus transfers sulfur from SufS to SufB. Mechanistically, the transfer from SufS to SufU is triggered by zinc-ligand swapping that provides a free thiol from SufU to accept sulfur from SufS. The sequence is that of Zinc-dependent sulfurtransferase SufU (sufU) from Bacillus subtilis (strain 168).